Reading from the N-terminus, the 601-residue chain is FAD-binding monooxygenase stcW (601 aa).

FAD-binding positions include 42–43 (FS), glutamate 64, tryptophan 73, aspartate 84, tyrosine 90, and valine 133.

The protein belongs to the FAD-binding monooxygenase family. The cofactor is FAD.

Its pathway is mycotoxin biosynthesis; sterigmatocystin biosynthesis. In terms of biological role, FAD-binding monooxygenase; part of the gene cluster that mediates the biosynthesis of sterigmatocystin (ST), a polyketide-derived furanocoumarin which is part of the most toxic and carcinogenic compounds among the known mycotoxins. The first step in the biosynthesis of sterigmatocystin is the production of hexanoate by the fatty acid synthase (FAS) units stcJ and stcK. The polyketide backbone is assembled by the non-reducing polyketide synthase stcA by condensation of the starter hexanoyl-CoA and 7 malonyl-CoA extender units followed by cyclization and release of norsolorinic acid. Norsolorinic acid is the first stable intermediate in the biosynthesis of sterigmatocystin and is converted into averantin (AVN) by the ketoreductase stcE which reduces the hexanoate ketone to an alcohol. Averantin is then oxidized into 5'-hydroxyaverantin (HAVN) by the cytochrome P450 monooxygenase stcF. 5'-hydroxyaverantin is further converted to 5'-oxyaverantin (OAVN) by the 5'-hydroxyaverantin dehydrogenase stcG. The next step is the conversion of OAVN into averufin (AVF) which is catalyzed by a yet to be identified enzyme. The cytochrome P450 monooxygenase stcB and the flavin-binding monooxygenase stcW are both required for the conversion of averufin to 1-hydroxyversicolorone. The esterase stcI probably catalyzes the formation of versiconal hemiacetal acetate from 1-hydroxyversicolorone. The oxydoreductase stcN then probably catalyzes the biosynthetic step from versiconal to versicolorin B (VERB). The next step is performed by the versicolorin B desaturase stcL to produce versicolorin A (VERA). The ketoreductase stcU and the cytochrome P450 monooxygenase stcS are involved in the conversion of versicolorin A to demethylsterigmatocystin. The Baeyer-Villiger oxidas stcQ and the reductase stcR might be involved in the biosynthetic step from versicolorin A to demethylsterigmatocystin. The final step in the biosynthesis of sterigmatocystin is the methylation of demethylsterigmatocystin catalyzed by the methyltransferase stcP. The polypeptide is FAD-binding monooxygenase stcW (Emericella nidulans (strain FGSC A4 / ATCC 38163 / CBS 112.46 / NRRL 194 / M139) (Aspergillus nidulans)).